Here is a 249-residue protein sequence, read N- to C-terminus: Phosphate import ATP-binding protein PstB (249 aa).

An ABC transporter domain is found at 5 to 244 (LRIEDLHFWY…PEKDRTEAYV (240 aa)). 37–44 (GPSGCGKS) serves as a coordination point for ATP.

It belongs to the ABC transporter superfamily. Phosphate importer (TC 3.A.1.7) family. The complex is composed of two ATP-binding proteins (PstB), two transmembrane proteins (PstC and PstA) and a solute-binding protein (PstS).

Its subcellular location is the cell inner membrane. It catalyses the reaction phosphate(out) + ATP + H2O = ADP + 2 phosphate(in) + H(+). Functionally, part of the ABC transporter complex PstSACB involved in phosphate import. Responsible for energy coupling to the transport system. This Salinibacter ruber (strain DSM 13855 / M31) protein is Phosphate import ATP-binding protein PstB.